The sequence spans 98 residues: ESAT-6-like protein EsxM (98 aa).

It belongs to the WXG100 family. CFP-10 subfamily.

The protein resides in the secreted. The polypeptide is ESAT-6-like protein EsxM (esxM) (Mycobacterium bovis (strain ATCC BAA-935 / AF2122/97)).